A 238-amino-acid chain; its full sequence is Hydatid disease diagnostic antigen P-29 (238 aa).

The BAR domain occupies 18 to 238 (GELVNKNEKT…AKECSMMLGE (221 aa)).

The protein is Hydatid disease diagnostic antigen P-29 of Echinococcus granulosus (Hydatid tapeworm).